The sequence spans 462 residues: Exodeoxyribonuclease 7 large subunit (462 aa).

It belongs to the XseA family. Heterooligomer composed of large and small subunits.

It is found in the cytoplasm. It carries out the reaction Exonucleolytic cleavage in either 5'- to 3'- or 3'- to 5'-direction to yield nucleoside 5'-phosphates.. Its function is as follows. Bidirectionally degrades single-stranded DNA into large acid-insoluble oligonucleotides, which are then degraded further into small acid-soluble oligonucleotides. This chain is Exodeoxyribonuclease 7 large subunit, found in Proteus mirabilis (strain HI4320).